The chain runs to 697 residues: Elongation factor G (697 aa).

The region spanning 8–282 is the tr-type G domain; sequence EDYRNIGIMA…AVVDYLPSPL (275 aa). GTP is bound by residues 17 to 24, 81 to 85, and 135 to 138; these read AHIDAGKT, DTPGH, and NKMD.

Belongs to the TRAFAC class translation factor GTPase superfamily. Classic translation factor GTPase family. EF-G/EF-2 subfamily.

It is found in the cytoplasm. In terms of biological role, catalyzes the GTP-dependent ribosomal translocation step during translation elongation. During this step, the ribosome changes from the pre-translocational (PRE) to the post-translocational (POST) state as the newly formed A-site-bound peptidyl-tRNA and P-site-bound deacylated tRNA move to the P and E sites, respectively. Catalyzes the coordinated movement of the two tRNA molecules, the mRNA and conformational changes in the ribosome. This chain is Elongation factor G, found in Mycoplasmopsis agalactiae (strain NCTC 10123 / CIP 59.7 / PG2) (Mycoplasma agalactiae).